The primary structure comprises 201 residues: Holliday junction branch migration complex subunit RuvA (201 aa).

Residues 1–63 (MYDYIKGIVK…EDNISLFGFQ (63 aa)) are domain I. Residues 64-142 (STEERYLFKK…DVVASEIVYK (79 aa)) are domain II. Residues 143–153 (AAENDIVTGLS) form a flexible linker region. Residues 153 to 201 (SPQLEEAVLALEALGYSTRELKKVIPKMAKENDLTSDAYIKLALRLMTK) are domain III.

It belongs to the RuvA family. Homotetramer. Forms an RuvA(8)-RuvB(12)-Holliday junction (HJ) complex. HJ DNA is sandwiched between 2 RuvA tetramers; dsDNA enters through RuvA and exits via RuvB. An RuvB hexamer assembles on each DNA strand where it exits the tetramer. Each RuvB hexamer is contacted by two RuvA subunits (via domain III) on 2 adjacent RuvB subunits; this complex drives branch migration. In the full resolvosome a probable DNA-RuvA(4)-RuvB(12)-RuvC(2) complex forms which resolves the HJ.

It is found in the cytoplasm. In terms of biological role, the RuvA-RuvB-RuvC complex processes Holliday junction (HJ) DNA during genetic recombination and DNA repair, while the RuvA-RuvB complex plays an important role in the rescue of blocked DNA replication forks via replication fork reversal (RFR). RuvA specifically binds to HJ cruciform DNA, conferring on it an open structure. The RuvB hexamer acts as an ATP-dependent pump, pulling dsDNA into and through the RuvAB complex. HJ branch migration allows RuvC to scan DNA until it finds its consensus sequence, where it cleaves and resolves the cruciform DNA. The sequence is that of Holliday junction branch migration complex subunit RuvA from Listeria innocua serovar 6a (strain ATCC BAA-680 / CLIP 11262).